The following is a 364-amino-acid chain: DNA polymerase IV (364 aa).

The 185-residue stretch at 14-198 (IIHIDMDAFF…LPIEKFHGVG (185 aa)) folds into the UmuC domain. 2 residues coordinate Mg(2+): Asp-18 and Asp-116. The active site involves Glu-117.

It belongs to the DNA polymerase type-Y family. As to quaternary structure, monomer. The cofactor is Mg(2+).

It localises to the cytoplasm. It catalyses the reaction DNA(n) + a 2'-deoxyribonucleoside 5'-triphosphate = DNA(n+1) + diphosphate. Its function is as follows. Poorly processive, error-prone DNA polymerase involved in untargeted mutagenesis. Copies undamaged DNA at stalled replication forks, which arise in vivo from mismatched or misaligned primer ends. These misaligned primers can be extended by PolIV. Exhibits no 3'-5' exonuclease (proofreading) activity. May be involved in translesional synthesis, in conjunction with the beta clamp from PolIII. This Streptococcus pyogenes serotype M1 protein is DNA polymerase IV.